The sequence spans 835 residues: Adhesion G protein-coupled receptor E5 (835 aa).

An N-terminal signal peptide occupies residues 1–20; the sequence is MGGRVFLAFCVWLTLPGAET. Residues 21 to 552 are Extracellular-facing; that stretch reads QDSRGCARWC…EDWKLTLITR (532 aa). Positions 22 to 63 constitute an EGF-like 1 domain; it reads DSRGCARWCPQNSSCVNATACRCNPGFSSFSEIITTPTETCD. Disulfide bonds link C26–C36, C30–C42, C44–C62, C68–C82, C76–C91, C93–C114, C120–C133, C127–C142, C144–C158, C164–C177, C171–C186, C188–C207, C213–C226, C220–C235, and C237–C256. N-linked (GlcNAc...) asparagine glycosylation is found at N33 and N38. Residues 64 to 115 enclose the EGF-like 2; calcium-binding domain; sequence DINECATPSKVSCGKFSDCWNTEGSYDCVCSPGYEPVSGAKTFKNESENTCQ. N-linked (GlcNAc...) asparagine glycosylation is present at N108. One can recognise an EGF-like 3; calcium-binding domain in the interval 116–159; that stretch reads DVDECQQNPRLCKSYGTCVNTLGSYTCQCLPGFKFIPEDPKVCT. In terms of domain architecture, EGF-like 4; calcium-binding spans 160–208; sequence DVNECTSGQNPCHSSTHCLNNVGSYQCRCRPGWQPIPGSPNGPNNTVCE. N203 carries N-linked (GlcNAc...) asparagine glycosylation. An EGF-like 5; calcium-binding domain is found at 209–257; the sequence is DVDECSSGQHQCDSSTVCFNTVGSYSCRCRPGWKPRHGIPNNQKDTVCE. Residues 349-543 form the GAIN-B domain; the sequence is PFTYISPSNT…AILMAHYDVE (195 aa). N-linked (GlcNAc...) asparagine glycosylation is found at N371, N406, N413, N453, and N520. 2 disulfides stabilise this stretch: C495–C525 and C513–C527. The GPS stretch occupies residues 495 to 543; the sequence is CAFWKSDSDRGGHWATEGCQVLGSKNGSTTCQCSHLSSFAILMAHYDVE. A helical membrane pass occupies residues 553-572; that stretch reads VGLALSLFCLLLCILTFLLV. The Cytoplasmic segment spans residues 573–581; sequence RPIQGSRTT. A helical membrane pass occupies residues 582–601; that stretch reads IHLHLCICLFVGSTIFLAGI. Topologically, residues 602–620 are extracellular; that stretch reads ENEGGQVGLRCRLVAGLLH. The helical transmembrane segment at 621–642 threads the bilayer; that stretch reads YCFLAAFCWMSLEGLELYFLVV. Over 643–653 the chain is Cytoplasmic; that stretch reads RVFQGQGLSTR. Residues 654–674 form a helical membrane-spanning segment; that stretch reads WLCLIGYGVPLLIVGVSAAIY. Over 675 to 691 the chain is Extracellular; sequence SKGYGRPRYCWLDFEQG. A helical transmembrane segment spans residues 692–712; it reads FLWSFLGPVTFIILCNAVIFV. The Cytoplasmic segment spans residues 713-739; sequence TTVWKLTQKFSEINPDMKKLKKARALT. A helical membrane pass occupies residues 740 to 760; the sequence is ITAIAQLFLLGCTWVFGLFIF. The Extracellular portion of the chain corresponds to 761-766; it reads DDRSLV. The helical transmembrane segment at 767–789 threads the bilayer; that stretch reads LTYVFTILNCLQGAFLYLLHCLL. Residues 790-835 are Cytoplasmic-facing; sequence NKKVREEYRKWACLVAGGSKYSEFTSTTSGTGHNQTRALRASESGI. Polar residues predominate over residues 814–826; it reads TSTTSGTGHNQTR. Residues 814–835 form a disordered region; sequence TSTTSGTGHNQTRALRASESGI. A Phosphoserine modification is found at S815. T816 carries the phosphothreonine modification. S818 bears the Phosphoserine mark. Phosphothreonine is present on T825. Phosphoserine occurs at positions 831 and 833.

Belongs to the G-protein coupled receptor 2 family. LN-TM7 subfamily. As to quaternary structure, forms a heterodimer, consisting of a large extracellular region (alpha subunit) non-covalently linked to a seven-transmembrane moiety (beta subunit). Interacts with complement decay-accelerating factor (DAF). The largest isoform (isoform 1) interacts with chondroitin sulfate. Post-translationally, proteolytically cleaved into 2 subunits, an extracellular alpha subunit and a seven-transmembrane subunit. Broadly expressed, found on most hematopoietic cells, including activated lymphocytes, monocytes, macrophages, dendritic cells, and granulocytes. Expressed also abundantly by smooth muscle cells. Expressed in thyroid, colorectal, gastric, esophageal and pancreatic carcinomas too. Expression are increased under inflammatory conditions in the CNS of multiple sclerosis and in synovial tissue of patients with rheumatoid arthritis. Increased expression of CD97 in the synovium is accompanied by detectable levels of soluble CD97 in the synovial fluid.

The protein localises to the cell membrane. It is found in the secreted. It localises to the extracellular space. Receptor potentially involved in both adhesion and signaling processes early after leukocyte activation. Plays an essential role in leukocyte migration. The polypeptide is Adhesion G protein-coupled receptor E5 (Homo sapiens (Human)).